The primary structure comprises 107 residues: Hydrogenase expression/formation protein HoxL (107 aa).

Belongs to the HupF/HypC family.

This chain is Hydrogenase expression/formation protein HoxL (hoxL), found in Cupriavidus necator (strain ATCC 17699 / DSM 428 / KCTC 22496 / NCIMB 10442 / H16 / Stanier 337) (Ralstonia eutropha).